The following is a 95-amino-acid chain: Aspartyl/glutamyl-tRNA(Asn/Gln) amidotransferase subunit C (95 aa).

The protein belongs to the GatC family. Heterotrimer of A, B and C subunits.

The catalysed reaction is L-glutamyl-tRNA(Gln) + L-glutamine + ATP + H2O = L-glutaminyl-tRNA(Gln) + L-glutamate + ADP + phosphate + H(+). It carries out the reaction L-aspartyl-tRNA(Asn) + L-glutamine + ATP + H2O = L-asparaginyl-tRNA(Asn) + L-glutamate + ADP + phosphate + 2 H(+). In terms of biological role, allows the formation of correctly charged Asn-tRNA(Asn) or Gln-tRNA(Gln) through the transamidation of misacylated Asp-tRNA(Asn) or Glu-tRNA(Gln) in organisms which lack either or both of asparaginyl-tRNA or glutaminyl-tRNA synthetases. The reaction takes place in the presence of glutamine and ATP through an activated phospho-Asp-tRNA(Asn) or phospho-Glu-tRNA(Gln). The chain is Aspartyl/glutamyl-tRNA(Asn/Gln) amidotransferase subunit C from Chromobacterium violaceum (strain ATCC 12472 / DSM 30191 / JCM 1249 / CCUG 213 / NBRC 12614 / NCIMB 9131 / NCTC 9757 / MK).